Reading from the N-terminus, the 100-residue chain is Urease subunit gamma (100 aa).

It belongs to the urease gamma subunit family. As to quaternary structure, heterotrimer of UreA (gamma), UreB (beta) and UreC (alpha) subunits. Three heterotrimers associate to form the active enzyme.

Its subcellular location is the cytoplasm. The catalysed reaction is urea + 2 H2O + H(+) = hydrogencarbonate + 2 NH4(+). The protein operates within nitrogen metabolism; urea degradation; CO(2) and NH(3) from urea (urease route): step 1/1. This is Urease subunit gamma from Burkholderia multivorans (strain ATCC 17616 / 249).